We begin with the raw amino-acid sequence, 220 residues long: UPF0319 protein YccT (220 aa).

Residues Met-1–Ala-20 form the signal peptide.

This sequence belongs to the UPF0319 family.

This is UPF0319 protein YccT from Salmonella schwarzengrund (strain CVM19633).